The sequence spans 34 residues: Calcitonin-like peptide 2 (34 aa).

Cysteine 2 and cysteine 7 form a disulfide bridge. Phenylalanine 34 carries the phenylalanine amide modification.

The polypeptide is Calcitonin-like peptide 2 (Odorrana schmackeri (Schmacker's frog)).